The chain runs to 690 residues: Glycine--tRNA ligase beta subunit (690 aa).

The protein belongs to the class-II aminoacyl-tRNA synthetase family. Tetramer of two alpha and two beta subunits.

It localises to the cytoplasm. The enzyme catalyses tRNA(Gly) + glycine + ATP = glycyl-tRNA(Gly) + AMP + diphosphate. The protein is Glycine--tRNA ligase beta subunit of Tolumonas auensis (strain DSM 9187 / NBRC 110442 / TA 4).